A 741-amino-acid polypeptide reads, in one-letter code: Phosphoribosylformylglycinamidine synthase subunit PurL (741 aa).

Residue His53 is part of the active site. Tyr56 and Lys95 together coordinate ATP. Glu97 lines the Mg(2+) pocket. Substrate is bound by residues 98-101 and Arg120; that span reads SHNH. Residue His99 is the Proton acceptor of the active site. Residue Asp121 coordinates Mg(2+). Gln244 serves as a coordination point for substrate. Mg(2+) is bound at residue Asp274. 318–320 contributes to the substrate binding site; it reads ESQ. ATP is bound by residues Asp501 and Gly538. A Mg(2+)-binding site is contributed by Asn539. Ser541 provides a ligand contact to substrate.

This sequence belongs to the FGAMS family. Monomer. Part of the FGAM synthase complex composed of 1 PurL, 1 PurQ and 2 PurS subunits.

It is found in the cytoplasm. It catalyses the reaction N(2)-formyl-N(1)-(5-phospho-beta-D-ribosyl)glycinamide + L-glutamine + ATP + H2O = 2-formamido-N(1)-(5-O-phospho-beta-D-ribosyl)acetamidine + L-glutamate + ADP + phosphate + H(+). It participates in purine metabolism; IMP biosynthesis via de novo pathway; 5-amino-1-(5-phospho-D-ribosyl)imidazole from N(2)-formyl-N(1)-(5-phospho-D-ribosyl)glycinamide: step 1/2. Functionally, part of the phosphoribosylformylglycinamidine synthase complex involved in the purines biosynthetic pathway. Catalyzes the ATP-dependent conversion of formylglycinamide ribonucleotide (FGAR) and glutamine to yield formylglycinamidine ribonucleotide (FGAM) and glutamate. The FGAM synthase complex is composed of three subunits. PurQ produces an ammonia molecule by converting glutamine to glutamate. PurL transfers the ammonia molecule to FGAR to form FGAM in an ATP-dependent manner. PurS interacts with PurQ and PurL and is thought to assist in the transfer of the ammonia molecule from PurQ to PurL. The protein is Phosphoribosylformylglycinamidine synthase subunit PurL of Ligilactobacillus salivarius (strain UCC118) (Lactobacillus salivarius).